A 773-amino-acid chain; its full sequence is E3 ubiquitin-protein ligase RFWD3 (773 aa).

4 disordered regions span residues 18–67 (VAEQ…SQVG), 92–117 (RVENINPGASEEHRQPSRVNRPIPVS), 139–230 (LRPP…EEVV), and 259–279 (GETLPKQSPQKTNPLLPSVSK). Residue serine 47 is modified to Phosphoserine; by ATM and ATR. Residues 50 to 59 (APPLLQPAPA) show a composition bias toward low complexity. Serine 64 carries the phosphoserine; by ATM and ATR modification. Over residues 151–164 (RSRRRRGSASRRSR) the composition is skewed to basic residues. Polar residues predominate over residues 186-205 (VSRTQPHLPSMSQDSETRNP). A compositionally biased stretch (low complexity) spans 207–221 (SEDLQVSSSSSSDSE). Polar residues predominate over residues 263–273 (PKQSPQKTNPL). The RING-type; degenerate zinc finger occupies 287–331 (CTICFEHWTNAGDHRLSALRCGHLFGYKCISKWLKGQARKCPQCN). The stretch at 361–403 (SLLKEQMLRKQAELESAQCRLQLQVLTDECSKLHSRVQDLQKL) forms a coiled coil. 3 WD repeats span residues 494-536 (MHGK…QTYN), 538-576 (GRPVWSCCWCLDESNHIYAGLVNGSILVYDLRNTSSHIQ), and 582-627 (KARC…SHWP).

Interacts with MDM2 and p53/TP53. Binds to the RPA complex via direct interaction with RPA2. Interacts with RAD51. Post-translationally, phosphorylated at Ser-46 and Ser-63 upon DNA damage by ATM or ATR. ATM phosphorylation occurs at early times upon DNA damage, while ATR is the major kinase at later times. Phosphorylation by ATM and ATR is required to stabilize p53/TP53. Part of the phosphorylation depends upon RPA2 presence.

The protein localises to the nucleus. It localises to the PML body. It is found in the cytoplasm. It catalyses the reaction S-ubiquitinyl-[E2 ubiquitin-conjugating enzyme]-L-cysteine + [acceptor protein]-L-lysine = [E2 ubiquitin-conjugating enzyme]-L-cysteine + N(6)-ubiquitinyl-[acceptor protein]-L-lysine.. It participates in protein modification; protein ubiquitination. Its function is as follows. E3 ubiquitin-protein ligase required for the repair of DNA interstrand cross-links (ICL) in response to DNA damage. Plays a key role in RPA-mediated DNA damage signaling and repair. Acts by mediating ubiquitination of the RPA complex (RPA1, RPA2 and RPA3 subunits) and RAD51 at stalled replication forks, leading to remove them from DNA damage sites and promote homologous recombination. Also mediates the ubiquitination of p53/TP53 in the late response to DNA damage, and acts as a positive regulator of p53/TP53 stability, thereby regulating the G1/S DNA damage checkpoint. May act by catalyzing the formation of short polyubiquitin chains on p53/TP53 that are not targeted to the proteasome. In response to ionizing radiation, interacts with MDM2 and enhances p53/TP53 ubiquitination, possibly by restricting MDM2 from extending polyubiquitin chains on ubiquitinated p53/TP53. Required to translesion DNA synthesis across DNA-protein cross-link adducts by catalyzing ubiquitination of proteins on single-stranded DNA (ssDNA). The protein is E3 ubiquitin-protein ligase RFWD3 (RFWD3) of Ailuropoda melanoleuca (Giant panda).